Consider the following 463-residue polypeptide: Asparagine--tRNA ligase (463 aa).

It belongs to the class-II aminoacyl-tRNA synthetase family. Homodimer.

It localises to the cytoplasm. The catalysed reaction is tRNA(Asn) + L-asparagine + ATP = L-asparaginyl-tRNA(Asn) + AMP + diphosphate + H(+). This chain is Asparagine--tRNA ligase, found in Nostoc sp. (strain PCC 7120 / SAG 25.82 / UTEX 2576).